A 516-amino-acid polypeptide reads, in one-letter code: H/ACA ribonucleoprotein complex subunit DKC1 (516 aa).

Residues 1–24 (MADGDGSSVKKRRKKDKRSLPDED) form a disordered region. Residue Asp123 is the Nucleophile of the active site. One can recognise a PUA domain in the interval 294-369 (HKRLVMKDSA…VVAKIKRVIM (76 aa)). The segment at 422–516 (KKEAAKVPQA…KQKEVEESSE (95 aa)) is disordered. Residues 434–446 (EVERAPKRKRESE) are compositionally biased toward basic and acidic residues. A compositionally biased stretch (pro residues) spans 453–464 (SPPPSPATPPPE). A coiled-coil region spans residues 463–516 (PEELSKKEKKKKKKEKKAKEAAESGEEQVEVISESSAKKKKKKKKQKEVEESSE). The segment covering 469–478 (KEKKKKKKEK) has biased composition (basic residues).

This sequence belongs to the pseudouridine synthase TruB family. As to quaternary structure, part of the H/ACA small nucleolar ribonucleoprotein (H/ACA snoRNP) complex, which contains NHP2/NOLA2, GAR1/NOLA1, NOP10/NOLA3, and DKC1/NOLA4, which is presumed to be the catalytic subunit. The complex contains a stable core formed by binding of one or two NOP10-DKC1 heterodimers to NHP2; GAR1 subsequently binds to this core via DKC1. The complex binds a box H/ACA small nucleolar RNA (snoRNA), which may target the specific site of modification within the RNA substrate.

It localises to the nucleus. The protein localises to the nucleolus. It is found in the cajal body. The enzyme catalyses uridine in 5S rRNA = pseudouridine in 5S rRNA. Its function is as follows. Catalytic subunit of H/ACA small nucleolar ribonucleoprotein (H/ACA snoRNP) complex, which catalyzes pseudouridylation of rRNA. This involves the isomerization of uridine such that the ribose is subsequently attached to C5, instead of the normal N1. Each rRNA can contain up to 100 pseudouridine ('psi') residues, which may serve to stabilize the conformation of rRNAs. Required for ribosome biogenesis and telomere maintenance. The sequence is that of H/ACA ribonucleoprotein complex subunit DKC1 (DKC1) from Gallus gallus (Chicken).